A 351-amino-acid chain; its full sequence is Cysteine-rich receptor-like protein kinase 45 (351 aa).

A Protein kinase domain is found at 37–287 (NDFSELVGRG…EILRYIHIAL (251 aa)). ATP is bound by residues 43 to 51 (VGRGGFGFV) and Lys-65. Tyr-110 is subject to Phosphotyrosine. Asp-162 functions as the Proton acceptor in the catalytic mechanism. Residues Thr-197 and Thr-202 each carry the phosphothreonine modification. The residue at position 210 (Tyr-210) is a Phosphotyrosine.

It belongs to the protein kinase superfamily. Ser/Thr protein kinase family. CRK subfamily. In terms of assembly, interacts with CRK36. Post-translationally, autophosphorylated and phosphorylated by CRK36.

Its subcellular location is the cytoplasm. The protein resides in the cytosol. It catalyses the reaction L-seryl-[protein] + ATP = O-phospho-L-seryl-[protein] + ADP + H(+). The enzyme catalyses L-threonyl-[protein] + ATP = O-phospho-L-threonyl-[protein] + ADP + H(+). Its function is as follows. Forms a complex with CRK36 that may negatively control abscisic acid (ABA) and osmotic stress signal transduction. Involved in plant response to ABA during seed germination, early seedling growth and responses to abiotic stresses by inducing the expression of ABA-responsive genes and stress-inducible genes. Acts as a positive regulator in disease resistance, downstream of NPR1 and WRKY70. The protein is Cysteine-rich receptor-like protein kinase 45 of Arabidopsis thaliana (Mouse-ear cress).